Consider the following 312-residue polypeptide: DNA-directed RNA polymerase subunit alpha (312 aa).

An alpha N-terminal domain (alpha-NTD) region spans residues 1–227 (MNNFYIKCLK…SFFSSLLENK (227 aa)). Positions 243–312 (PKNPHTNIAI…KNKLGIVLSN (70 aa)) are alpha C-terminal domain (alpha-CTD).

The protein belongs to the RNA polymerase alpha chain family. In plastids the minimal PEP RNA polymerase catalytic core is composed of four subunits: alpha, beta, beta', and beta''. When a (nuclear-encoded) sigma factor is associated with the core the holoenzyme is formed, which can initiate transcription.

The protein localises to the plastid. It is found in the chloroplast. It carries out the reaction RNA(n) + a ribonucleoside 5'-triphosphate = RNA(n+1) + diphosphate. Its function is as follows. DNA-dependent RNA polymerase catalyzes the transcription of DNA into RNA using the four ribonucleoside triphosphates as substrates. This is DNA-directed RNA polymerase subunit alpha from Trieres chinensis (Marine centric diatom).